Reading from the N-terminus, the 309-residue chain is uncharacterized protein (309 aa).

It belongs to the anthranilate phosphoribosyltransferase family.

This is an uncharacterized protein from Aquifex aeolicus (strain VF5).